A 249-amino-acid polypeptide reads, in one-letter code: 3-deoxy-manno-octulosonate cytidylyltransferase (249 aa).

Belongs to the KdsB family.

It localises to the cytoplasm. The catalysed reaction is 3-deoxy-alpha-D-manno-oct-2-ulosonate + CTP = CMP-3-deoxy-beta-D-manno-octulosonate + diphosphate. It participates in nucleotide-sugar biosynthesis; CMP-3-deoxy-D-manno-octulosonate biosynthesis; CMP-3-deoxy-D-manno-octulosonate from 3-deoxy-D-manno-octulosonate and CTP: step 1/1. The protein operates within bacterial outer membrane biogenesis; lipopolysaccharide biosynthesis. Functionally, activates KDO (a required 8-carbon sugar) for incorporation into bacterial lipopolysaccharide in Gram-negative bacteria. The polypeptide is 3-deoxy-manno-octulosonate cytidylyltransferase (Aliivibrio fischeri (strain ATCC 700601 / ES114) (Vibrio fischeri)).